A 526-amino-acid polypeptide reads, in one-letter code: Transcription factor MYC1 (526 aa).

The tract at residues 330-351 (MFPSQNSGLNQDDPSDRRKENE) is disordered. Positions 332 to 341 (PSQNSGLNQD) are enriched in polar residues. Positions 333-382 (SQNSGLNQDDPSDRRKENEKFSVLRTMVPTVNEVDKESILNNTIKYLQEL) constitute a bHLH domain.

Homodimer. Interacts with MYB75/PAP1, MYB90/PAP2, MYB4, MYB5, MYB6, MYB23, MYB82, MYB113, MYB114, TT2, MYB0/GL1, and MYB66/WER. As to expression, mostly expressed in developing seeds. Also detected in stems and leaves.

The protein localises to the nucleus. Trancsription activator, when associated with MYB75/PAP1 or MYB90/PAP2. The polypeptide is Transcription factor MYC1 (BHLH12) (Arabidopsis thaliana (Mouse-ear cress)).